Consider the following 142-residue polypeptide: Small ribosomal subunit protein uS11 (142 aa).

The interval 1–21 (MPPKTRGAVRKPRRKDKKNIA) is disordered. The span at 7–17 (GAVRKPRRKDK) shows a compositional bias: basic residues.

It belongs to the universal ribosomal protein uS11 family. As to quaternary structure, part of the 30S ribosomal subunit. Interacts with proteins S7 and S18. Binds to IF-3.

Its function is as follows. Located on the platform of the 30S subunit, it bridges several disparate RNA helices of the 16S rRNA. Forms part of the Shine-Dalgarno cleft in the 70S ribosome. In Paenarthrobacter aurescens (strain TC1), this protein is Small ribosomal subunit protein uS11.